The primary structure comprises 44 residues: Putative keratin-associated protein 20-4 (44 aa).

It belongs to the KRTAP type 20 family. As to quaternary structure, interacts with hair keratins.

Functionally, in the hair cortex, hair keratin intermediate filaments are embedded in an interfilamentous matrix, consisting of hair keratin-associated proteins (KRTAP), which are essential for the formation of a rigid and resistant hair shaft through their extensive disulfide bond cross-linking with abundant cysteine residues of hair keratins. The matrix proteins include the high-sulfur and high-glycine-tyrosine keratins. This Homo sapiens (Human) protein is Putative keratin-associated protein 20-4 (KRTAP20-4).